Reading from the N-terminus, the 345-residue chain is Probable velvet family sexual development regulator LACBIDRAFT_317102 (345 aa).

Composition is skewed to polar residues over residues 1–13 (MFTTHPQGRSYRS) and 24–38 (EIQNSYDQHANNPPR). Disordered regions lie at residues 1 to 43 (MFTT…TRRR), 138 to 189 (ESWT…SPSS), and 310 to 345 (RKRRKKGEIGSPLDDPKSKRKRTSLGSEDDEASDED). Residues 62–306 (GQTIRAELDE…ARWGVRLNIR (245 aa)) enclose the Velvet domain. Low complexity-rich tracts occupy residues 141-158 (TSRSPTQTSFSSSSPTLS) and 167-184 (SSPQTSSPTAAQSQASTP). Over residues 336-345 (SEDDEASDED) the composition is skewed to acidic residues.

This sequence belongs to the velvet family.

It is found in the nucleus. Functionally, velvet-domain-containing protein that probably acts as a positive regulator of sexual development. The chain is Probable velvet family sexual development regulator LACBIDRAFT_317102 from Laccaria bicolor (strain S238N-H82 / ATCC MYA-4686) (Bicoloured deceiver).